The primary structure comprises 473 residues: Asparagine--tRNA ligase (473 aa).

The protein belongs to the class-II aminoacyl-tRNA synthetase family. In terms of assembly, homodimer.

It localises to the cytoplasm. It carries out the reaction tRNA(Asn) + L-asparagine + ATP = L-asparaginyl-tRNA(Asn) + AMP + diphosphate + H(+). In Treponema denticola (strain ATCC 35405 / DSM 14222 / CIP 103919 / JCM 8153 / KCTC 15104), this protein is Asparagine--tRNA ligase.